Consider the following 277-residue polypeptide: Radial spoke head protein 9 homolog (277 aa).

This sequence belongs to the flagellar radial spoke RSP9 family. Component of axonemal radial spoke complexes.

The protein resides in the cytoplasm. It is found in the cytoskeleton. It localises to the cilium axoneme. The protein localises to the flagellum axoneme. Its subcellular location is the cell projection. The protein resides in the kinocilium. Functionally, functions as part of axonemal radial spoke complexes that play an important part in the motility of sperm and cilia. Required for motility of olfactory and neural cilia and for the structural integrity of ciliary axonemes in both 9+0 and 9+2 motile cilia. Essential for both the radial spoke head assembly and the central pair microtubule stability in ependymal motile cilia. This chain is Radial spoke head protein 9 homolog (rsph9), found in Danio rerio (Zebrafish).